Reading from the N-terminus, the 130-residue chain is Small ribosomal subunit protein uS9 (130 aa).

Belongs to the universal ribosomal protein uS9 family.

The protein is Small ribosomal subunit protein uS9 of Pseudomonas putida (strain ATCC 700007 / DSM 6899 / JCM 31910 / BCRC 17059 / LMG 24140 / F1).